The following is a 99-amino-acid chain: Co-chaperonin GroES (99 aa).

Belongs to the GroES chaperonin family. Heptamer of 7 subunits arranged in a ring. Interacts with the chaperonin GroEL.

Its subcellular location is the cytoplasm. Its function is as follows. Together with the chaperonin GroEL, plays an essential role in assisting protein folding. The GroEL-GroES system forms a nano-cage that allows encapsulation of the non-native substrate proteins and provides a physical environment optimized to promote and accelerate protein folding. GroES binds to the apical surface of the GroEL ring, thereby capping the opening of the GroEL channel. This Rhodococcus erythropolis (strain PR4 / NBRC 100887) protein is Co-chaperonin GroES.